The primary structure comprises 209 residues: Eukaryotic translation initiation factor 4E (209 aa).

It belongs to the eukaryotic initiation factor 4E family. In terms of assembly, eIF4F is a multi-subunit complex, the composition of which varies with external and internal environmental conditions. It is composed of at least eIF4A, eIF4E and eIF4G. eIF4E is also known to interact with other partners.

In terms of biological role, recognizes and binds the 7-methylguanosine-containing mRNA cap during an early step in the initiation of protein synthesis and facilitates ribosome binding by inducing the unwinding of the mRNAs secondary structures. This chain is Eukaryotic translation initiation factor 4E (TIF45), found in Candida glabrata (strain ATCC 2001 / BCRC 20586 / JCM 3761 / NBRC 0622 / NRRL Y-65 / CBS 138) (Yeast).